The chain runs to 181 residues: MLQAMDQGHLLVNNVDKYVRAGRGVMVYIAFLSDRDSAPITDEALRHAVGVLLHTKIFTHFSPEKMINQPQSLEECPEMDILIVPQASLGGKVKGRSVQFHQLVAKDVGAALYDRFCHFVRVARGVDESRVDANGAPRSEGDAPKAEGWIKYNSRVISGTFGNRQGLRFESEGPFTHMFDI.

This sequence belongs to the DTD family. Highly divergent. Homodimer.

It is found in the cytoplasm. Functionally, may hydrolyze D-tyrosyl-tRNA(Tyr) into D-tyrosine and free tRNA(Tyr). Could be a defense mechanism against a harmful effect of D-tyrosine. The chain is Putative D-tyrosyl-tRNA(Tyr) deacylase 2 from Leishmania major.